The primary structure comprises 235 residues: Small ribosomal subunit protein uS3 (235 aa).

The KH type-2 domain occupies 39-107; that stretch reads VRQFLNKELA…PAQINIAEVK (69 aa). Positions 215–226 are enriched in low complexity; that stretch reads AQQPEQQPATPK. Residues 215 to 235 form a disordered region; the sequence is AQQPEQQPATPKKAPRGKGRK.

Belongs to the universal ribosomal protein uS3 family. As to quaternary structure, part of the 30S ribosomal subunit. Forms a tight complex with proteins S10 and S14.

Binds the lower part of the 30S subunit head. Binds mRNA in the 70S ribosome, positioning it for translation. This Histophilus somni (strain 129Pt) (Haemophilus somnus) protein is Small ribosomal subunit protein uS3.